The sequence spans 99 residues: Bublin coiled-coil protein (99 aa).

Residues 34–71 are a coiled coil; sequence LDQINSCLDDIEERNDALNGKLQELLESNRAARRDFRQ. Residues 66–78 show a composition bias toward basic and acidic residues; the sequence is RRDFRQQITDHAD. Residues 66-99 are disordered; the sequence is RRDFRQQITDHADLPPPANDDDEDEQSRDAQKKD.

This sequence belongs to the UPF0184 (EST00098) family.

It is found in the cell junction. The protein resides in the cytoplasm. It localises to the cytoskeleton. Functionally, essential for intermediate filament organization in intestinal cells, interacts with intermediate filament and regulates intestinal lumen morphology. The chain is Bublin coiled-coil protein (bbln) from Danio rerio (Zebrafish).